The following is an 88-amino-acid chain: Small ribosomal subunit protein bS18 (88 aa).

The protein belongs to the bacterial ribosomal protein bS18 family. Part of the 30S ribosomal subunit. Forms a tight heterodimer with protein bS6.

In terms of biological role, binds as a heterodimer with protein bS6 to the central domain of the 16S rRNA, where it helps stabilize the platform of the 30S subunit. The sequence is that of Small ribosomal subunit protein bS18 from Aliarcobacter butzleri (strain RM4018) (Arcobacter butzleri).